Reading from the N-terminus, the 106-residue chain is Immunoglobulin lambda constant 1 (106 aa).

The Ig-like domain maps to 7-101; sequence PTVTLFPPSS…EGSTVEKTVA (95 aa). The cysteines at positions 28 and 87 are disulfide-linked.

As to quaternary structure, immunoglobulins are composed of two identical heavy chains and two identical light chains; disulfide-linked.

Its subcellular location is the secreted. The protein resides in the cell membrane. In terms of biological role, constant region of immunoglobulin light chains. Immunoglobulins, also known as antibodies, are membrane-bound or secreted glycoproteins produced by B lymphocytes. In the recognition phase of humoral immunity, the membrane-bound immunoglobulins serve as receptors which, upon binding of a specific antigen, trigger the clonal expansion and differentiation of B lymphocytes into immunoglobulins-secreting plasma cells. Secreted immunoglobulins mediate the effector phase of humoral immunity, which results in the elimination of bound antigens. The antigen binding site is formed by the variable domain of one heavy chain, together with that of its associated light chain. Thus, each immunoglobulin has two antigen binding sites with remarkable affinity for a particular antigen. The variable domains are assembled by a process called V-(D)-J rearrangement and can then be subjected to somatic hypermutations which, after exposure to antigen and selection, allow affinity maturation for a particular antigen. In Homo sapiens (Human), this protein is Immunoglobulin lambda constant 1.